Consider the following 288-residue polypeptide: ATP phosphoribosyltransferase (288 aa).

The protein belongs to the ATP phosphoribosyltransferase family. Long subfamily. Requires Mg(2+) as cofactor.

The protein localises to the cytoplasm. The catalysed reaction is 1-(5-phospho-beta-D-ribosyl)-ATP + diphosphate = 5-phospho-alpha-D-ribose 1-diphosphate + ATP. The protein operates within amino-acid biosynthesis; L-histidine biosynthesis; L-histidine from 5-phospho-alpha-D-ribose 1-diphosphate: step 1/9. Feedback inhibited by histidine. In terms of biological role, catalyzes the condensation of ATP and 5-phosphoribose 1-diphosphate to form N'-(5'-phosphoribosyl)-ATP (PR-ATP). Has a crucial role in the pathway because the rate of histidine biosynthesis seems to be controlled primarily by regulation of HisG enzymatic activity. This Methanococcus maripaludis (strain C7 / ATCC BAA-1331) protein is ATP phosphoribosyltransferase.